A 58-amino-acid chain; its full sequence is UPF0391 membrane protein Sfri_4000 (58 aa).

2 consecutive transmembrane segments (helical) span residues 6-26 (LMFLVIAVIAGLFGFTGIAGA) and 27-47 (AAGIAKIIFFIFIVLLVISLV).

Belongs to the UPF0391 family.

The protein localises to the cell membrane. In Shewanella frigidimarina (strain NCIMB 400), this protein is UPF0391 membrane protein Sfri_4000.